The sequence spans 5400 residues: Midasin (5400 aa).

AAA-ATPase protomer regions lie at residues 345-571 (MVSL…HGLP), 656-986 (LLEK…AIKA), 1050-1308 (SYVK…EKVV), 1347-1652 (SMRR…VNMA), 1769-2023 (VLRV…VLRI), and 2074-2347 (IRQN…MMGP). Residues 360 to 367 (GPSGSGKS), 674 to 681 (GETGTGKT), 1079 to 1086 (GPTSSGKT), 1369 to 1376 (GDTGGGKT), 1786 to 1793 (GSPGVGKT), and 2095 to 2102 (GPSSSGKT) contribute to the ATP site. The linker stretch occupies residues 2435-4569 (IYLSSLGVTD…DGVGAKDVSD (2135 aa)). Coiled coils occupy residues 2896 to 2916 (LERL…SEID), 3233 to 3253 (AMKI…LELN), and 3896 to 3916 (MEQL…VLKL). 3 disordered regions span residues 4540–4890 (EEDD…SSSN), 4905–4929 (TLTD…TKVN), and 4990–5069 (QVNT…RMDS). The segment covering 4576–4612 (QLHGTDKKEEEEKEQDDVLGKNKGIEMSDEFDGKEYS) has biased composition (basic and acidic residues). The segment covering 4613 to 4631 (VSEDEEEDKEDEGSEDEPL) has biased composition (acidic residues). 2 stretches are compositionally biased toward basic and acidic residues: residues 4641–4652 (DAEKADEKPWNK) and 4661–4687 (MNEK…KDDG). Acidic residues-rich tracts occupy residues 4688 to 4698 (VETADEPEESN) and 4706 to 4721 (GNDE…DTDN). The span at 4722-4732 (LEEKIQTKEEA) shows a compositional bias: basic and acidic residues. Residues 4740–4750 (VDNEQIDDDME) are compositionally biased toward acidic residues. Residues 4751-4762 (MDKTEEVEKEDA) show a composition bias toward basic and acidic residues. The segment covering 4779–4798 (GENDQEETQEPSEENMEAEA) has biased composition (acidic residues). The span at 4799-4810 (EDRCGSPQKEEP) shows a compositional bias: basic and acidic residues. Over residues 4811–4822 (GNDLEQEPETEP) the composition is skewed to acidic residues. The segment covering 4823-4834 (IEGKEVMSEDMM) has biased composition (basic and acidic residues). Polar residues-rich tracts occupy residues 4839 to 4855 (RNDN…NPHG), 4864 to 4874 (TAPQENLSATD), 4916 to 4928 (PQNQ…QTKV), and 5030 to 5040 (SKPSISNSIAE). Residues 5157–5164 (MKKVIPYI) carry the Nuclear localization signal motif. A VWFA domain is found at 5186 to 5387 (QVVIAVDDSR…EALPRTLGDV (202 aa)). Positions 5271–5291 (VVNLLRNMNEMLENLASTRRQ) form a coiled coil.

The protein belongs to the midasin family. In terms of assembly, associates with pre-60S ribosomes in the nucleoplasm. Constitutively and ubiquitously expressed. Mostly observed in the shoot apex and root tip, and, to a lower extent, in mature seeds, seedling (excluding the hypocotyl), roots, stems, leaves and flowers.

It is found in the nucleus. It localises to the nucleolus. The protein localises to the nucleoplasm. In terms of biological role, nuclear chaperone required for maturation and nuclear export of pre-60S ribosome subunits. Functions at successive maturation steps to remove ribosomal factors at critical transition points, first driving the exit of early pre-60S particles from the nucleolus and then driving late pre-60S particles from the nucleus. Required for female gametophyte development. Involved in the expression regulation of genes related to plant growth and development. The sequence is that of Midasin from Arabidopsis thaliana (Mouse-ear cress).